Here is a 211-residue protein sequence, read N- to C-terminus: SAGA-associated factor 11 homolog 1 (211 aa).

The segment at Cys-115–Cys-136 adopts an SGF11-type zinc-finger fold. Residues Arg-149–Phe-211 are disordered. The segment covering Ser-157–Thr-166 has biased composition (low complexity). Residue Ser-187 is modified to Phosphoserine. Residues Ser-197 to Phe-211 are compositionally biased toward low complexity.

This sequence belongs to the SGF11 family. Component of some SAGA transcription coactivator-HAT complexes, at least composed of Ada2b, not/nonstop, Pcaf/Gcn5, Sgf11 and Spt3. Within the SAGA complex, Sgf11, e(y)2, and not/nonstop form an additional subcomplex of SAGA called the DUB module (deubiquitination module). Interacts directly with not/nonstop. Interacts with the AMEX complex component xmas-2. Interacts with Cbp80; important for promoter recruitment of Sgf11 that is not associated with the DUB module.

Its subcellular location is the nucleus. It is found in the nucleoplasm. It localises to the cytoplasm. Its function is as follows. Component of the transcription regulatory histone acetylation (HAT) complex SAGA, a multiprotein complex that activates transcription by remodeling chromatin and mediating histone acetylation and deubiquitination. Within the SAGA complex, participates in a subcomplex that specifically deubiquitinates histone H2B. The SAGA complex is recruited to specific gene promoters by activators, where it is required for transcription. Required for nuclear receptor-mediated transactivation. Binds independently on SAGA to promoters in an RNA-dependent manner. Binds to mRNA and is essential for total mRNA export from the nucleus. Required to counteract heterochromatin silencing. Controls the development of neuronal connectivity in visual system by being required for accurate axon targeting in the optic lobe. Required for expression of ecdysone-induced genes such as br/broad. This chain is SAGA-associated factor 11 homolog 1, found in Drosophila grimshawi (Hawaiian fruit fly).